The following is a 412-amino-acid chain: Probable inactive allantoicase (412 aa).

The protein belongs to the allantoicase family.

Functionally, the function of this enzyme is unclear as allantoicase activity is not known to exist in mammals. This chain is Probable inactive allantoicase (ALLC), found in Bos taurus (Bovine).